The following is a 143-amino-acid chain: Subtelomeric hrmA-associated cluster protein cgnA (143 aa).

29 G-Q-I/R/S repeats span residues 11–13 (GQI), 14–16 (GPI), 17–19 (GQR), 20–22 (GQS), 23–25 (GQR), 26–28 (GQS), 29–31 (GQR), 32–34 (GQS), 35–37 (GQI), 38–40 (GQS), 41–43 (GQS), 44–46 (GQS), 47–49 (GQI), 50–52 (GQI), 53–55 (GQI), 56–58 (GQI), 59–61 (GQI), 62–64 (GQI), 65–67 (GQI), 68–70 (GQI), 71–73 (GQI), 74–76 (GQI), 77–79 (GQI), 80–82 (GQI), 83–85 (GQI), 86–88 (GQI), 89–91 (GQI), 92–94 (GQI), and 95–97 (GQA). A Collagen-like domain is found at 11 to 68 (GQIGPIGQRGQSGQRGQSGQRGQSGQIGQSGQSGQSGQIGQIGQIGQIGQIGQIGQIG). Residues 11–97 (GQIGPIGQRG…IGQIGQIGQA (87 aa)) form a 29 X 3 AA approximate tandem repeats of G-Q-I/R/S region. The disordered stretch occupies residues 16–49 (IGQRGQSGQRGQSGQRGQSGQIGQSGQSGQSGQI).

Its subcellular location is the secreted. In terms of biological role, collagen-like protein; part of the subtelomeric hrmA-associated cluster (HAC) containing genes that alter the hyphal surface (such as reduced total chitin or increased beta-glucan exposure) and perturb inter-hyphal interactions within the developing biofilms, resulting in a loss of vertically aligned polarized growing filaments. Consequently, this hypoxia-typic morphotype (called H-MORPH) with altered biofilm architecture leads to increased hypoxia fitness, increased host inflammation, rapid disease progression, and mortality in a murine model of invasive aspergillosis. CgnA is directly involved in the reduction of total surface chitin and the increase of beta-glucan exposure, and mediates the detachment of the extracellular matrix and especially of its component galactosaminogalactan (GAG). This chain is Subtelomeric hrmA-associated cluster protein cgnA, found in Aspergillus fumigatus (strain ATCC MYA-4609 / CBS 101355 / FGSC A1100 / Af293) (Neosartorya fumigata).